The chain runs to 658 residues: Threonine--tRNA ligase (658 aa).

A TGS domain is found at methionine 1–glutamine 61. Residues aspartate 259 to proline 554 are catalytic. Zn(2+) is bound by residues cysteine 353, histidine 404, and histidine 531.

Belongs to the class-II aminoacyl-tRNA synthetase family. In terms of assembly, homodimer. Requires Zn(2+) as cofactor.

The protein localises to the cytoplasm. The catalysed reaction is tRNA(Thr) + L-threonine + ATP = L-threonyl-tRNA(Thr) + AMP + diphosphate + H(+). In terms of biological role, catalyzes the attachment of threonine to tRNA(Thr) in a two-step reaction: L-threonine is first activated by ATP to form Thr-AMP and then transferred to the acceptor end of tRNA(Thr). Also edits incorrectly charged L-seryl-tRNA(Thr). This is Threonine--tRNA ligase from Streptomyces avermitilis (strain ATCC 31267 / DSM 46492 / JCM 5070 / NBRC 14893 / NCIMB 12804 / NRRL 8165 / MA-4680).